The chain runs to 555 residues: 2-isopropylmalate synthase (555 aa).

A Pyruvate carboxyltransferase domain is found at 30–303 (PIWCSVDLRD…DPGLDCTDIN (274 aa)). The Mg(2+) site is built by Asp-39, His-242, His-244, and Asn-278. The segment at 437-555 (QPDARIKFVD…VSAANRVIAK (119 aa)) is regulatory domain.

It belongs to the alpha-IPM synthase/homocitrate synthase family. LeuA type 2 subfamily. In terms of assembly, homodimer. Mg(2+) is required as a cofactor.

The protein localises to the cytoplasm. The enzyme catalyses 3-methyl-2-oxobutanoate + acetyl-CoA + H2O = (2S)-2-isopropylmalate + CoA + H(+). The protein operates within amino-acid biosynthesis; L-leucine biosynthesis; L-leucine from 3-methyl-2-oxobutanoate: step 1/4. In terms of biological role, catalyzes the condensation of the acetyl group of acetyl-CoA with 3-methyl-2-oxobutanoate (2-ketoisovalerate) to form 3-carboxy-3-hydroxy-4-methylpentanoate (2-isopropylmalate). The polypeptide is 2-isopropylmalate synthase (Brucella suis biovar 1 (strain 1330)).